The sequence spans 181 residues: ATP-dependent protease subunit HslV (181 aa).

Thr7 is an active-site residue. The Na(+) site is built by Ala162, Cys165, and Thr168.

Belongs to the peptidase T1B family. HslV subfamily. In terms of assembly, a double ring-shaped homohexamer of HslV is capped on each side by a ring-shaped HslU homohexamer. The assembly of the HslU/HslV complex is dependent on binding of ATP.

The protein localises to the cytoplasm. It catalyses the reaction ATP-dependent cleavage of peptide bonds with broad specificity.. Allosterically activated by HslU binding. Protease subunit of a proteasome-like degradation complex believed to be a general protein degrading machinery. This Coxiella burnetii (strain RSA 493 / Nine Mile phase I) protein is ATP-dependent protease subunit HslV.